The following is a 77-amino-acid chain: Acyl carrier protein (77 aa).

Residues 1-76 (MSLEDDVKAI…DVIKYIQEHQ (76 aa)) enclose the Carrier domain. O-(pantetheine 4'-phosphoryl)serine is present on S36.

Belongs to the acyl carrier protein (ACP) family. Post-translationally, 4'-phosphopantetheine is transferred from CoA to a specific serine of apo-ACP by AcpS. This modification is essential for activity because fatty acids are bound in thioester linkage to the sulfhydryl of the prosthetic group.

It is found in the cytoplasm. It functions in the pathway lipid metabolism; fatty acid biosynthesis. In terms of biological role, carrier of the growing fatty acid chain in fatty acid biosynthesis. This chain is Acyl carrier protein, found in Chlamydia trachomatis serovar L2 (strain ATCC VR-902B / DSM 19102 / 434/Bu).